We begin with the raw amino-acid sequence, 727 residues long: Elongation factor 2 (727 aa).

A tr-type G domain is found at 19 to 260 (DQIRNMGICA…MAIKHLPNPL (242 aa)). GTP is bound by residues 28–35 (AHIDHGKT), 94–98 (DTPGH), and 148–151 (NKVD). A Diphthamide modification is found at histidine 603.

Belongs to the TRAFAC class translation factor GTPase superfamily. Classic translation factor GTPase family. EF-G/EF-2 subfamily.

The protein localises to the cytoplasm. Functionally, catalyzes the GTP-dependent ribosomal translocation step during translation elongation. During this step, the ribosome changes from the pre-translocational (PRE) to the post-translocational (POST) state as the newly formed A-site-bound peptidyl-tRNA and P-site-bound deacylated tRNA move to the P and E sites, respectively. Catalyzes the coordinated movement of the two tRNA molecules, the mRNA and conformational changes in the ribosome. This chain is Elongation factor 2, found in Methanococcus maripaludis (strain C7 / ATCC BAA-1331).